The primary structure comprises 156 residues: Small ribosomal subunit protein uS7 (156 aa).

Belongs to the universal ribosomal protein uS7 family. As to quaternary structure, part of the 30S ribosomal subunit. Contacts proteins S9 and S11.

Its function is as follows. One of the primary rRNA binding proteins, it binds directly to 16S rRNA where it nucleates assembly of the head domain of the 30S subunit. Is located at the subunit interface close to the decoding center, probably blocks exit of the E-site tRNA. The polypeptide is Small ribosomal subunit protein uS7 (Cellvibrio japonicus (strain Ueda107) (Pseudomonas fluorescens subsp. cellulosa)).